A 26-amino-acid chain; its full sequence is Aralin B chain (26 aa).

In terms of assembly, disulfide-linked dimer of A and B chains. Glycosylated. High-mannose type oligosaccharides.

Its function is as follows. Lectin specific for galactose (Gal) and its derivatives. Induces apoptosis. Has cytotoxic activity against several human cancer cell lines. Is less cytotoxic to normal human cells. In Aralia elata (Japanese angelica tree), this protein is Aralin B chain.